Here is a 184-residue protein sequence, read N- to C-terminus: Photosystem I assembly protein Ycf4 (184 aa).

Helical transmembrane passes span 22–42 (FCWAFILFLGSLGFLLVGISS) and 57–77 (IIFFPQGIVMSFYGIAGLFIS).

It belongs to the Ycf4 family.

Its subcellular location is the plastid. It localises to the chloroplast thylakoid membrane. In terms of biological role, seems to be required for the assembly of the photosystem I complex. The sequence is that of Photosystem I assembly protein Ycf4 from Ipomoea purpurea (Common morning glory).